Reading from the N-terminus, the 477-residue chain is 3-isopropylmalate dehydratase large subunit (477 aa).

Cysteine 358, cysteine 419, and cysteine 422 together coordinate [4Fe-4S] cluster.

This sequence belongs to the aconitase/IPM isomerase family. LeuC type 1 subfamily. In terms of assembly, heterodimer of LeuC and LeuD. It depends on [4Fe-4S] cluster as a cofactor.

The catalysed reaction is (2R,3S)-3-isopropylmalate = (2S)-2-isopropylmalate. It functions in the pathway amino-acid biosynthesis; L-leucine biosynthesis; L-leucine from 3-methyl-2-oxobutanoate: step 2/4. Catalyzes the isomerization between 2-isopropylmalate and 3-isopropylmalate, via the formation of 2-isopropylmaleate. This chain is 3-isopropylmalate dehydratase large subunit, found in Acinetobacter baylyi (strain ATCC 33305 / BD413 / ADP1).